The primary structure comprises 266 residues: Putative transmembrane ascorbate-dependent reductase CYB561 homolog (266 aa).

Over 1–22 (MSLLFDPGFVILREDQSVKLFN) the chain is Cytoplasmic. The chain crosses the membrane as a helical span at residues 23-43 (IILVMSQVFGGLAVLLVTIWM). A Cytochrome b561 domain is found at 27–240 (MSQVFGGLAV…YTVCVLLLVL (214 aa)). Over 44-61 (SKFESGFAWNEDPDKEFN) the chain is Vesicular. A helical membrane pass occupies residues 62-82 (YHPTFMIMGMVFLFGEALLVY). Residues His-63, Arg-83, and Lys-90 each coordinate heme b. At 83–95 (RVFRNERKKFSKT) the chain is on the cytoplasmic side. 2 residues coordinate L-ascorbate: Lys-90 and Lys-94. Residues 96–116 (LHVILHSCVLVFMLMALKAVF) traverse the membrane as a helical segment. Heme b contacts are provided by residues His-97, 134–137 (NLVS), and His-139. Residues 117–141 (DYHNLHKDPSGNPAPIVNLVSLHSW) are Vesicular-facing. A helical membrane pass occupies residues 142-162 (IGLSVVILYFAQYIVGFITYF). At 163-176 (FPGMPIPIRQLVMP) the chain is on the cytoplasmic side. An L-ascorbate-binding site is contributed by Arg-171. Residues 177-197 (FHQMFGVLIFIFVSITVAMGI) traverse the membrane as a helical segment. Heme b is bound by residues His-178 and Glu-199. Residues 198-219 (SERAAWKHTCWTKEGQMCAQQA) lie on the Vesicular side of the membrane. Residues 220 to 240 (TSSFVGVFTFLYTVCVLLLVL) form a helical membrane-spanning segment. Residues 241–266 (NPRWKRQSLPEEEGLHHLTSSHSMSD) lie on the Cytoplasmic side of the membrane. Lys-245 lines the heme b pocket.

Heme b serves as cofactor.

Its subcellular location is the membrane. It carries out the reaction monodehydro-L-ascorbate radical(out) + L-ascorbate(in) = monodehydro-L-ascorbate radical(in) + L-ascorbate(out). Its function is as follows. Putative transmembrane reductase that uses ascorbate as an electron donor in the cytoplasm and transfers electrons across membranes to reduce monodehydro-L-ascorbate radical in the lumen of secretory vesicles. This chain is Putative transmembrane ascorbate-dependent reductase CYB561 homolog, found in Caenorhabditis elegans.